The chain runs to 383 residues: Serine protease 23 (383 aa).

Residues 1–19 (MAGIPGLLFLLFFLLCAVG) form the signal peptide. Asparagine 93 carries an N-linked (GlcNAc...) asparagine glycan. A Phosphoserine; by FAM20C modification is found at serine 109. Cysteines 160 and 176 form a disulfide. The active-site Charge relay system is histidine 175. N-linked (GlcNAc...) asparagine glycosylation occurs at asparagine 207. Catalysis depends on charge relay system residues aspartate 240 and serine 316.

This sequence belongs to the peptidase S1 family.

It localises to the secreted. The chain is Serine protease 23 (PRSS23) from Homo sapiens (Human).